Reading from the N-terminus, the 295-residue chain is Ribosomal protein L11 methyltransferase (295 aa).

Positions 145, 166, 188, and 230 each coordinate S-adenosyl-L-methionine.

The protein belongs to the methyltransferase superfamily. PrmA family.

The protein localises to the cytoplasm. It carries out the reaction L-lysyl-[protein] + 3 S-adenosyl-L-methionine = N(6),N(6),N(6)-trimethyl-L-lysyl-[protein] + 3 S-adenosyl-L-homocysteine + 3 H(+). Its function is as follows. Methylates ribosomal protein L11. The protein is Ribosomal protein L11 methyltransferase of Pectobacterium atrosepticum (strain SCRI 1043 / ATCC BAA-672) (Erwinia carotovora subsp. atroseptica).